The following is a 228-amino-acid chain: UPF0758 protein CLD_1541 (228 aa).

Positions 106 to 228 constitute an MPN domain; that stretch reads KINTPLDVSN…YVSMKEKGTI (123 aa). The Zn(2+) site is built by H177, H179, and D190. Residues 177–190 carry the JAMM motif motif; that stretch reads HNHPSGDPTPSKED.

Belongs to the UPF0758 family.

In Clostridium botulinum (strain Okra / Type B1), this protein is UPF0758 protein CLD_1541.